The sequence spans 147 residues: Transcription antitermination protein NusB (147 aa).

This sequence belongs to the NusB family.

Its function is as follows. Involved in transcription antitermination. Required for transcription of ribosomal RNA (rRNA) genes. Binds specifically to the boxA antiterminator sequence of the ribosomal RNA (rrn) operons. The sequence is that of Transcription antitermination protein NusB from Teredinibacter turnerae (strain ATCC 39867 / T7901).